The following is a 336-amino-acid chain: Holliday junction branch migration complex subunit RuvB (336 aa).

The large ATPase domain (RuvB-L) stretch occupies residues 4–184; the sequence is ADRLISAGAT…FGIVQRLEFY (181 aa). ATP contacts are provided by residues isoleucine 23, arginine 24, glycine 65, lysine 68, threonine 69, threonine 70, 131–133, arginine 174, tyrosine 184, and arginine 221; that span reads EDY. Threonine 69 lines the Mg(2+) pocket. A small ATPAse domain (RuvB-S) region spans residues 185 to 255; it reads QVPDLQHIVG…IAAQALDMLN (71 aa). The head domain (RuvB-H) stretch occupies residues 258 to 336; the sequence is AEGFDYMDRK…HFGITPPEMP (79 aa). The DNA site is built by arginine 294, arginine 313, and arginine 318.

Belongs to the RuvB family. Homohexamer. Forms an RuvA(8)-RuvB(12)-Holliday junction (HJ) complex. HJ DNA is sandwiched between 2 RuvA tetramers; dsDNA enters through RuvA and exits via RuvB. An RuvB hexamer assembles on each DNA strand where it exits the tetramer. Each RuvB hexamer is contacted by two RuvA subunits (via domain III) on 2 adjacent RuvB subunits; this complex drives branch migration. In the full resolvosome a probable DNA-RuvA(4)-RuvB(12)-RuvC(2) complex forms which resolves the HJ.

The protein localises to the cytoplasm. The enzyme catalyses ATP + H2O = ADP + phosphate + H(+). Its function is as follows. The RuvA-RuvB-RuvC complex processes Holliday junction (HJ) DNA during genetic recombination and DNA repair, while the RuvA-RuvB complex plays an important role in the rescue of blocked DNA replication forks via replication fork reversal (RFR). RuvA specifically binds to HJ cruciform DNA, conferring on it an open structure. The RuvB hexamer acts as an ATP-dependent pump, pulling dsDNA into and through the RuvAB complex. RuvB forms 2 homohexamers on either side of HJ DNA bound by 1 or 2 RuvA tetramers; 4 subunits per hexamer contact DNA at a time. Coordinated motions by a converter formed by DNA-disengaged RuvB subunits stimulates ATP hydrolysis and nucleotide exchange. Immobilization of the converter enables RuvB to convert the ATP-contained energy into a lever motion, pulling 2 nucleotides of DNA out of the RuvA tetramer per ATP hydrolyzed, thus driving DNA branch migration. The RuvB motors rotate together with the DNA substrate, which together with the progressing nucleotide cycle form the mechanistic basis for DNA recombination by continuous HJ branch migration. Branch migration allows RuvC to scan DNA until it finds its consensus sequence, where it cleaves and resolves cruciform DNA. This is Holliday junction branch migration complex subunit RuvB from Salmonella choleraesuis (strain SC-B67).